Here is a 921-residue protein sequence, read N- to C-terminus: Bifunctional aspartokinase/homoserine dehydrogenase, chloroplastic (921 aa).

The N-terminal 87 residues, 1-87 (SLSSAISPSS…DDSVEKVHLP (87 aa)), are a transit peptide targeting the chloroplast. An aspartokinase region spans residues 88–339 (RGAMWSIHKF…VSEAVVLKTL (252 aa)). The segment at 340 to 567 (SYQEAWEMSY…LSRTTIAVGI (228 aa)) is interface. 2 consecutive ACT domains span residues 417-489 (VEGT…QVAN) and 498-575 (TVGQ…LIGA). The homoserine dehydrogenase stretch occupies residues 568-921 (VGPGLIGATL…RLASYLGAPS (354 aa)). Ile573 contacts NAD(+). 4 residues coordinate NADP(+): Ile573, Arg605, Thr654, and Lys678. Ile573 contacts NADPH. Thr654 provides a ligand contact to NAD(+). The NADPH site is built by Thr654 and Lys678. Glu705, Val708, Ala710, and Leu712 together coordinate Na(+). 2 residues coordinate NADP(+): Gly763 and Glu766. Residues Glu766 and Asp777 each contribute to the L-homoserine site. The active-site Proton donor is Lys781. NAD(+) is bound at residue Gly898. Gly898 is a binding site for NADP(+). Gly898 lines the NADPH pocket.

This sequence in the N-terminal section; belongs to the aspartokinase family. The protein in the C-terminal section; belongs to the homoserine dehydrogenase family. Requires a metal cation as cofactor.

It localises to the plastid. The protein localises to the chloroplast. It carries out the reaction L-homoserine + NADP(+) = L-aspartate 4-semialdehyde + NADPH + H(+). It catalyses the reaction L-homoserine + NAD(+) = L-aspartate 4-semialdehyde + NADH + H(+). The catalysed reaction is L-aspartate + ATP = 4-phospho-L-aspartate + ADP. Its pathway is amino-acid biosynthesis; L-lysine biosynthesis via DAP pathway; (S)-tetrahydrodipicolinate from L-aspartate: step 1/4. It participates in amino-acid biosynthesis; L-methionine biosynthesis via de novo pathway; L-homoserine from L-aspartate: step 1/3. It functions in the pathway amino-acid biosynthesis; L-methionine biosynthesis via de novo pathway; L-homoserine from L-aspartate: step 3/3. The protein operates within amino-acid biosynthesis; L-threonine biosynthesis; L-threonine from L-aspartate: step 1/5. Its pathway is amino-acid biosynthesis; L-threonine biosynthesis; L-threonine from L-aspartate: step 3/5. Bifunctional aspartate kinase and homoserine dehydrogenase that catalyzes the first and the third steps toward the synthesis of lysine, methionine and threonine from aspartate. In Daucus carota (Wild carrot), this protein is Bifunctional aspartokinase/homoserine dehydrogenase, chloroplastic.